The primary structure comprises 1337 residues: ABC transporter D family member 1 (1337 aa).

The next 4 membrane-spanning stretches (helical) occupy residues 24 to 44 (ILLA…KSRV), 142 to 162 (APLF…LSTL), 247 to 267 (YASP…GTAI), and 342 to 362 (FLLK…PFFS). One can recognise an ABC transmembrane type-1 1 domain in the interval 117 to 395 (VFRTALSNRL…SVIISLFQAL (279 aa)). In terms of domain architecture, ABC transporter 1 spans 448–695 (VEFSDVKVVT…DAMVVQRAFA (248 aa)). An ATP-binding site is contributed by 481 to 488 (GPNGSGKS). In terms of domain architecture, ABC transmembrane type-1 2 spans 751–1049 (LIPTIFDKQG…VVSQSFMAFG (299 aa)). Residues 900–920 (LLTGQRGVAILYTYMLLGLGF) form a helical membrane-spanning segment. The ABC transporter 2 domain occupies 1091–1337 (LDSQDLLSFS…ELRSIEQTTE (247 aa)). 1130-1137 (GPNGSGKT) serves as a coordination point for ATP.

Belongs to the ABC transporter superfamily. ABCD family. Peroxisomal fatty acyl CoA transporter (TC 3.A.1.203) subfamily.

The protein resides in the peroxisome membrane. It localises to the glyoxysome membrane. It carries out the reaction an acyl-CoA(out) + ATP + H2O = an acyl-CoA(in) + ADP + phosphate + H(+). Contributes to the transport of fatty acids and their derivatives (acyl CoAs) across the peroxisomal membrane. Provides acetate to the glyoxylate cycle in developing seedlings. Involved in pollen tube elongation, ovule fertilization, and seeds germination after imbibition (controls the switch between the opposing developmental programs of dormancy and germination), probably by promoting beta-oxidation of storage lipids during gluconeogenesis. Required for biosynthesis of jasmonic acid and conversion of indole butyric acid to indole acetic acid. Confers sensitivity to monofluoroacetic acid (FAc), a toxic acetate analog, and to 2,4-dichlorophenoxybutyric acid (2,4-DB) and indole-3-butyric acid (IBA), two precursors of auxin after beta-oxidation. The sequence is that of ABC transporter D family member 1 from Arabidopsis thaliana (Mouse-ear cress).